Here is a 775-residue protein sequence, read N- to C-terminus: MDFIDFDSFQQDEIPQPQPALSLPITSNIENLGKRFSNFNSLTKNLLKFDEKDDIKVDGDESEETKLAEKYANLSLNLINSLEDDNEEENESDLNRSKTTTTLSTRLSRVLNNSMPDSLVREIFANLDLKIENIAALVEPGITGSNSRKKLRGEIENDLIKTQGLMLKEYQPVIKNLSNLENDLKNLNGLRDSITEKVNKDFQSTKDLNGEVKNLNDTKSLINLKKGLLISFQNKFALDVYEEYVLQNGEINDEFFQVLIKCEKIHENCSILLSVDNPQLGLKIMSKFNQLINKSVERIINFTNKTLNNLYSLNTTTKLTTLHQCLKFLRKRLNYFNTVIDNFVDTRSRLIIDEFLNQINGDLDKSGDNRSGSIQHDRPIILSAHDPVRFIGDLLAYIHSVVVNETETISSIFGISKEENEDDDIEYKDIIDDVTGRILNSLSRSVKSKIEQVITSETKLATIYAIYSLVELYTIMFAKHLKESSNDKHNLLMTVRELVSSSQNKIISIIQNKLTTIKSSNSAQLELNTDLQPPEWIIEFYSDILPIIDQNTSDTFMNLSTENNAEFMKMIINKPIEIFNEHIENNISKLFNRRDQVILKLNFLDLILSKIMPIILLSDKILELNDLTEKLSLELTNLQLDSLISGCQLTNFYNIINMICPFSDDFFDVSIYQPITENKLFSEDNIIAANDIIQNFLPSALLDIQQSLFKVNSPMIVNNIITNSSLEFIKFYLKFNLIINEYLDDASLIWSDIEVATLLGVEEPYQQTKKSMSFD.

It belongs to the COG6 family.

It localises to the golgi apparatus membrane. Its function is as follows. Acts as a component of the peripheral membrane COG complex that is involved in intra-Golgi protein trafficking. COG is located at the cis-Golgi, and regulates tethering of retrograde intra-Golgi vesicles and possibly a number of other membrane trafficking events. The protein is Conserved oligomeric Golgi complex subunit 6 (COG6) of Debaryomyces hansenii (strain ATCC 36239 / CBS 767 / BCRC 21394 / JCM 1990 / NBRC 0083 / IGC 2968) (Yeast).